The sequence spans 82 residues: Translational regulator CsrA (82 aa).

This sequence belongs to the CsrA/RsmA family. Homodimer; the beta-strands of each monomer intercalate to form a hydrophobic core, while the alpha-helices form wings that extend away from the core.

The protein localises to the cytoplasm. Functionally, a translational regulator that binds mRNA to regulate translation initiation and/or mRNA stability. Usually binds in the 5'-UTR at or near the Shine-Dalgarno sequence preventing ribosome-binding, thus repressing translation. Its main target seems to be the major flagellin gene, while its function is anatagonized by FliW. This chain is Translational regulator CsrA, found in Geobacillus sp. (strain WCH70).